An 871-amino-acid polypeptide reads, in one-letter code: MFSSDELRENYLKFFEEKGHKRIASSSLIPHNDPTLLLTTAGMVQFKPYYLGVAKPENPRMASCQKCFRTTDIESVGDASHLTMFEMLGNFSIGNYFKKEAIAWAWEYVTQRLNIPAERLWITVYLDDDEAIALWKEQGVPENRIVRLGAADNFWGPAGDSGPCGPCSEIHYDFGQETGCGKADCNPSCKCGRFCEIWNLVFVQFNQDKSGKRQNLPAPSIDTGMGLERLTILMQSKKNVYETDIFAPIVEKACLLSGRKYGCDAATDRALRIVSEHSRGITFLIADGVIPDKAGRGYVLRRLLRRAVLFGRRLGLERPFLVDMAGAVINRMSGIYPELKKRQTYVLEMIASEEARFSETLATGLELLEEIVRQTKGGRISGQDAFKLYDTYGFPVEMTTEIAAEKGLSVDLDGFESEMEIQRTKARSSRKFSFDAAATAEAVKNMRHAEKTCFVGYELAIQKSTIKDILTEGGTVDSIEEGDEASIVLDESPFYAEMGGQVGDTGEIITDAGRFEVKNTLHLPNGVFLHQGRVINGCLKISEAATAHINEERRRDIARNHTATHILQTALREVLGEQVQQRGSVVTPDRLRFDFSHLKPMSKDEMRRVEEFVNDKIRRNLPVYAEEMPYRHALEEGVTALFGEKYGDRVRVLRVGRPAVSAELCGGTHVTASGEIALFKIMSESSVGAGLRRIEAVTGREAEAFINLQQDSLSELSGMLESTAEESPRKLAELKEEIDTLKKAVQNLERQMSRGEAEELLSKAEDYKGVKLLVSRMTSVNADTLRETADFLRDKLGSGVIVLGTVTEDKPFFLCMVTPDLIAKGYHAGNIVKKLSQIAGGGGGGKPNMAQGGGRDKSKLDEALQAVKGMI.

The Zn(2+) site is built by His561, His565, Cys665, and His669.

The protein belongs to the class-II aminoacyl-tRNA synthetase family. Requires Zn(2+) as cofactor.

Its subcellular location is the cytoplasm. It carries out the reaction tRNA(Ala) + L-alanine + ATP = L-alanyl-tRNA(Ala) + AMP + diphosphate. Functionally, catalyzes the attachment of alanine to tRNA(Ala) in a two-step reaction: alanine is first activated by ATP to form Ala-AMP and then transferred to the acceptor end of tRNA(Ala). Also edits incorrectly charged Ser-tRNA(Ala) and Gly-tRNA(Ala) via its editing domain. The sequence is that of Alanine--tRNA ligase from Dehalococcoides mccartyi (strain ATCC BAA-2100 / JCM 16839 / KCTC 5957 / BAV1).